We begin with the raw amino-acid sequence, 106 residues long: UPF0145 protein VV2_1464 (106 aa).

It belongs to the UPF0145 family.

The chain is UPF0145 protein VV2_1464 from Vibrio vulnificus (strain CMCP6).